The following is a 418-amino-acid chain: MDQNLSGLDCLSEPDEKRWPDGKRKRKNSQCMGKSGMSGDSLVSLPSAGYIPSYLDKDEPCVVCSDKATGYHYRCITCEGCKGFFRRTIQKNLHPSYSCKYDGCCIIDKITRNQCQLCRFKKCIAVGMAMDLVLDDSKRVAKRKLIEENRQRRRKEEMIKTLQQRPEPSSEEWELIRIVTEAHRSTNAQGSHWKQRRKFLPEDIGQSPMASMPDGDKVDLEAFSEFTKIITPAITRVVDFAKKLPMFSELTCEDQIILLKGCCMEIMSLRAAVRYDPDSETLTLSGEMAVKREQLKNGGLGVVSDAIFDLGRSLAAFNLDDTEVALLQAVLLMSSDRTGLICTDKIEKCQETYLLAFEHYINHRKHNIPHFWPKLLMKVTDLRMIGACHASRFLHMKVECPTELFPPLFLEVFEDQEV.

Residues 1–38 (MDQNLSGLDCLSEPDEKRWPDGKRKRKNSQCMGKSGMS) form a disordered region. The segment at 1–60 (MDQNLSGLDCLSEPDEKRWPDGKRKRKNSQCMGKSGMSGDSLVSLPSAGYIPSYLDKDEP) is modulating. 2 consecutive NR C4-type zinc fingers follow at residues 61–81 (CVVC…CEGC) and 99–123 (CKYD…FKKC). Residues 61 to 135 (CVVCSDKATG…VGMAMDLVLD (75 aa)) constitute a DNA-binding region (nuclear receptor). An NR LBD domain is found at 171–415 (EEWELIRIVT…PPLFLEVFED (245 aa)).

The protein belongs to the nuclear hormone receptor family. NR1 subfamily. As to quaternary structure, binds to thyroid hormone receptor element (TRE) weakly as homodimers and monomers, but binds TRE with much higher affinity as heterodimers with retinoid X receptors. Can bind DNA as a heterodimer with either rxra or rxrg.

The protein resides in the nucleus. In terms of biological role, high affinity receptor for triiodothyronine (T3). This is Thyroid hormone receptor alpha-A (thra-a) from Xenopus laevis (African clawed frog).